Consider the following 344-residue polypeptide: FCS-Like Zinc finger 10 (344 aa).

An FLZ-type zinc finger spans residues 270-314 (DFLSFCYGCSKKLGMGEDIYMYSGYKAFCSSECRSKEIDLDEEME). Over residues 309–320 (LDEEMEDGDEEE) the composition is skewed to acidic residues. The disordered stretch occupies residues 309–344 (LDEEMEDGDEEEAIKSVSSSDKESKKKSNGVFFTVG).

Belongs to the FLZ family. Interacts with KIN10 and KIN11 via its FLZ-type zinc finger domain. Interacts with KINB1, KINB2 and KINB3 via its N-terminal part. Forms homodimer and heterodimer with FLZ2 and FLZ12 in vitro. In terms of tissue distribution, early expressed in hypocotyl and cotyledon and preferentially in the stelar region of the shoot and root. Later expressed in root-shoot junction, lateral root, old or senescing leaves and in pistil and pollen of flower buds or open flowers.

It localises to the cytoplasm. Its subcellular location is the nucleus. The protein resides in the endoplasmic reticulum. May act as an adapter to facilitate the interaction of SnRK1 complex with effector proteins, conferring tissue- and stimulus-type specific differences in the SnRK1 regulation pathway. Negatively regulates KIN10 leading to a repression of the SnRK1 signaling pathway. In Arabidopsis thaliana (Mouse-ear cress), this protein is FCS-Like Zinc finger 10.